A 28-amino-acid chain; its full sequence is Putative fruR/shl operon leader peptide (28 aa).

This Escherichia coli O6:H1 (strain CFT073 / ATCC 700928 / UPEC) protein is Putative fruR/shl operon leader peptide (fruL).